The following is an 89-amino-acid chain: Barrier-to-autointegration factor 1 (89 aa).

This sequence belongs to the BAF family. As to quaternary structure, interacts with emr-1 and lem-2. Interacts with lem-4l, leading to decreased phosphorylation by VRK1 and promoting dephosphorylation by protein phosphatase 2A (PP2A). Phosphorylated by vrk-1. Phosphorylation by vrk-1 in mitosis is essential to achieve correct timing of recruitment of nuclear envelope components during nuclear envelope assembly. Dephosphorylated by protein phosphatase 2A (PP2A) following interaction with lem-4l during mitotic exit, leading to mitotic nuclear envelope reassembly.

The protein resides in the nucleus. DNA-binding protein which plays an essential role in nuclear envelope formation. Required for normal chromosome segregation during mitosis. Associates with the nuclear lamina via its interaction with LEM domain containing proteins emr-1 and lem-2. In association with lem-3, plays a role in radiation-induced DNA damage repair response. The chain is Barrier-to-autointegration factor 1 (baf-1) from Caenorhabditis elegans.